Consider the following 807-residue polypeptide: Glycerol-3-phosphate acyltransferase (807 aa).

The HXXXXD motif motif lies at cysteine 305–methionine 310.

The protein belongs to the GPAT/DAPAT family.

The protein localises to the cell inner membrane. The catalysed reaction is sn-glycerol 3-phosphate + an acyl-CoA = a 1-acyl-sn-glycero-3-phosphate + CoA. It functions in the pathway phospholipid metabolism; CDP-diacylglycerol biosynthesis; CDP-diacylglycerol from sn-glycerol 3-phosphate: step 1/3. The polypeptide is Glycerol-3-phosphate acyltransferase (Klebsiella pneumoniae (strain 342)).